The sequence spans 38 residues: Large ribosomal subunit protein bL36 (38 aa).

The protein belongs to the bacterial ribosomal protein bL36 family.

The protein is Large ribosomal subunit protein bL36 of Pseudothermotoga lettingae (strain ATCC BAA-301 / DSM 14385 / NBRC 107922 / TMO) (Thermotoga lettingae).